The chain runs to 216 residues: Octanoyltransferase (216 aa).

Residues 35-213 (NSNPDFIWIG…IIQEEFNFDF (179 aa)) enclose the BPL/LPL catalytic domain. Residues 77–84 (RGGEVTCH), 144–146 (SIG), and 157–159 (GFS) contribute to the substrate site. Residue Cys175 is the Acyl-thioester intermediate of the active site.

Belongs to the LipB family.

It localises to the cytoplasm. The catalysed reaction is octanoyl-[ACP] + L-lysyl-[protein] = N(6)-octanoyl-L-lysyl-[protein] + holo-[ACP] + H(+). Its pathway is protein modification; protein lipoylation via endogenous pathway; protein N(6)-(lipoyl)lysine from octanoyl-[acyl-carrier-protein]: step 1/2. Functionally, catalyzes the transfer of endogenously produced octanoic acid from octanoyl-acyl-carrier-protein onto the lipoyl domains of lipoate-dependent enzymes. Lipoyl-ACP can also act as a substrate although octanoyl-ACP is likely to be the physiological substrate. This Prochlorococcus marinus (strain MIT 9312) protein is Octanoyltransferase.